The chain runs to 639 residues: Centromere protein T (639 aa).

5 disordered regions span residues 1 to 64 (MDGR…RPNA), 266 to 294 (QLSD…GLVS), 307 to 451 (SEKD…ERGT), 458 to 477 (AAEE…ESEE), and 494 to 534 (QPVL…TREP). Over residues 12-23 (RAAPTPRVAVRS) the composition is skewed to low complexity. The segment at 80–500 (IIQNQPQVSP…YRPQPVLSPP (421 aa)) is flexible stalk domain. The segment covering 267 to 281 (LSDSKTSAQRSNTSY) has biased composition (polar residues). Basic and acidic residues-rich tracts occupy residues 307–319 (SEKD…EHVD), 329–338 (QGEEEQDHSQ), 356–371 (TEHH…SEKK), and 432–449 (PGAK…EIER). Residues 458–469 (AAEEEATDDESD) show a composition bias toward acidic residues.

This sequence belongs to the CENP-T/CNN1 family. As to quaternary structure, component of the CENPA-CAD complex, composed of CENPI, CENPK, CENPL, CENPO, CENPP, CENPQ, CENPR and CENPS. The CENPA-CAD complex is probably recruited on centromeres by the CENPA-NAC complex, at least composed of CENPA, CENPC, CENPH, CENPM, CENPN, CENPT and CENPU. Identified in a centromeric complex containing histones H2A, H2B, H3 and H4, and at least CENPA, CENPB, CENPC, CENPT, CENPN, HJURP, SUPT16H, SSRP1 and RSF1. Interacts (via N-terminus) with the NDC80 complex. Heterodimer with CENPW; this dimer coassembles with CENPS-CENPX heterodimers at centromeres to form the tetrameric CENP-T-W-S-X complex.

The protein localises to the nucleus. The protein resides in the chromosome. It is found in the centromere. Its subcellular location is the kinetochore. Component of the CENPA-NAC (nucleosome-associated) complex, a complex that plays a central role in assembly of kinetochore proteins, mitotic progression and chromosome segregation. The CENPA-NAC complex recruits the CENPA-CAD (nucleosome distal) complex and may be involved in incorporation of newly synthesized CENPA into centromeres. Part of a nucleosome-associated complex that binds specifically to histone H3-containing nucleosomes at the centromere, as opposed to nucleosomes containing CENPA. Component of the heterotetrameric CENP-T-W-S-X complex that binds and supercoils DNA, and plays an important role in kinetochore assembly. CENPT has a fundamental role in kinetochore assembly and function. It is one of the inner kinetochore proteins, with most further proteins binding downstream. Required for normal chromosome organization and normal progress through mitosis. The sequence is that of Centromere protein T (CENPT) from Gallus gallus (Chicken).